The primary structure comprises 298 residues: Elongation factor Ts (298 aa).

The tract at residues 79–82 (TDFV) is involved in Mg(2+) ion dislocation from EF-Tu.

Belongs to the EF-Ts family.

Its subcellular location is the cytoplasm. Functionally, associates with the EF-Tu.GDP complex and induces the exchange of GDP to GTP. It remains bound to the aminoacyl-tRNA.EF-Tu.GTP complex up to the GTP hydrolysis stage on the ribosome. In Cereibacter sphaeroides (strain ATCC 17029 / ATH 2.4.9) (Rhodobacter sphaeroides), this protein is Elongation factor Ts.